The primary structure comprises 205 residues: Probable GTP-binding protein EngB (205 aa).

Residues 27 to 201 (TGIEIAFAGR…AVKLDFWFSP (175 aa)) form the EngB-type G domain. GTP is bound by residues 35–42 (GRSNAGKS), 62–66 (GRTQL), 80–83 (DLPG), 147–150 (TKAD), and 180–182 (FSA). Mg(2+) is bound by residues S42 and T64.

The protein belongs to the TRAFAC class TrmE-Era-EngA-EngB-Septin-like GTPase superfamily. EngB GTPase family. The cofactor is Mg(2+).

Necessary for normal cell division and for the maintenance of normal septation. The polypeptide is Probable GTP-binding protein EngB (Haemophilus influenzae (strain PittGG)).